The primary structure comprises 209 residues: Large ribosomal subunit protein bL25 (209 aa).

The segment at 190-209 (GLKSADDEAEGEDAEEAAAE) is disordered. Over residues 196-209 (DEAEGEDAEEAAAE) the composition is skewed to acidic residues.

The protein belongs to the bacterial ribosomal protein bL25 family. CTC subfamily. In terms of assembly, part of the 50S ribosomal subunit; part of the 5S rRNA/L5/L18/L25 subcomplex. Contacts the 5S rRNA. Binds to the 5S rRNA independently of L5 and L18.

This is one of the proteins that binds to the 5S RNA in the ribosome where it forms part of the central protuberance. The sequence is that of Large ribosomal subunit protein bL25 from Ruegeria sp. (strain TM1040) (Silicibacter sp.).